The primary structure comprises 94 residues: Small ribosomal subunit protein bS18 (94 aa).

This sequence belongs to the bacterial ribosomal protein bS18 family. In terms of assembly, part of the 30S ribosomal subunit. Forms a tight heterodimer with protein bS6.

Binds as a heterodimer with protein bS6 to the central domain of the 16S rRNA, where it helps stabilize the platform of the 30S subunit. This is Small ribosomal subunit protein bS18 from Polaromonas sp. (strain JS666 / ATCC BAA-500).